The chain runs to 304 residues: Non-specific ribonucleoside hydrolase RihC (304 aa).

His233 is a catalytic residue.

Belongs to the IUNH family. RihC subfamily.

Its function is as follows. Hydrolyzes both purine and pyrimidine ribonucleosides with a broad-substrate specificity. The sequence is that of Non-specific ribonucleoside hydrolase RihC from Escherichia coli (strain SE11).